Here is a 490-residue protein sequence, read N- to C-terminus: Cytochrome P450 2C8 (490 aa).

Residues serine 100, asparagine 204, and arginine 241 each contribute to the substrate site. Phosphoserine is present on serine 100. Residue cysteine 435 participates in heme binding.

It belongs to the cytochrome P450 family. Heme serves as cofactor.

It localises to the endoplasmic reticulum membrane. It is found in the microsome membrane. The catalysed reaction is an organic molecule + reduced [NADPH--hemoprotein reductase] + O2 = an alcohol + oxidized [NADPH--hemoprotein reductase] + H2O + H(+). It carries out the reaction (5Z,8Z,11Z,14Z)-eicosatetraenoate + reduced [NADPH--hemoprotein reductase] + O2 = (11R,12S)-epoxy-(5Z,8Z,14Z)-eicosatrienoate + oxidized [NADPH--hemoprotein reductase] + H2O + H(+). The enzyme catalyses (5Z,8Z,11Z,14Z)-eicosatetraenoate + reduced [NADPH--hemoprotein reductase] + O2 = (11S,12R)-epoxy-(5Z,8Z,14Z)-eicosatrienoate + oxidized [NADPH--hemoprotein reductase] + H2O + H(+). It catalyses the reaction (5Z,8Z,11Z,14Z)-eicosatetraenoate + reduced [NADPH--hemoprotein reductase] + O2 = (14R,15S)-epoxy-(5Z,8Z,11Z)-eicosatrienoate + oxidized [NADPH--hemoprotein reductase] + H2O + H(+). The catalysed reaction is (5Z,8Z,11Z,14Z)-eicosatetraenoate + reduced [NADPH--hemoprotein reductase] + O2 = (14S,15R)-epoxy-(5Z,8Z,11Z)-eicosatrienoate + oxidized [NADPH--hemoprotein reductase] + H2O + H(+). It carries out the reaction (5Z,8Z,11Z,14Z,17Z)-eicosapentaenoate + reduced [NADPH--hemoprotein reductase] + O2 = 11,12-epoxy-(5Z,8Z,14Z,17Z)-eicosatetraenoate + oxidized [NADPH--hemoprotein reductase] + H2O + H(+). The enzyme catalyses (5Z,8Z,11Z,14Z,17Z)-eicosapentaenoate + reduced [NADPH--hemoprotein reductase] + O2 = 14,15-epoxy-(5Z,8Z,11Z,17Z)-eicosatetraenoate + oxidized [NADPH--hemoprotein reductase] + H2O + H(+). It catalyses the reaction (5Z,8Z,11Z,14Z,17Z)-eicosapentaenoate + reduced [NADPH--hemoprotein reductase] + O2 = (17R,18S)-epoxy-(5Z,8Z,11Z,14Z)-eicosatetraenoate + oxidized [NADPH--hemoprotein reductase] + H2O + H(+). The catalysed reaction is (5Z,8Z,11Z,14Z,17Z)-eicosapentaenoate + reduced [NADPH--hemoprotein reductase] + O2 = (17S,18R)-epoxy-(5Z,8Z,11Z,14Z)-eicosatetraenoate + oxidized [NADPH--hemoprotein reductase] + H2O + H(+). It carries out the reaction (4Z,7Z,10Z,13Z,16Z,19Z)-docosahexaenoate + reduced [NADPH--hemoprotein reductase] + O2 = (19R,20S)-epoxy-(4Z,7Z,10Z,13Z,16Z)-docosapentaenoate + oxidized [NADPH--hemoprotein reductase] + H2O + H(+). The enzyme catalyses (4Z,7Z,10Z,13Z,16Z,19Z)-docosahexaenoate + reduced [NADPH--hemoprotein reductase] + O2 = (19S,20R)-epoxy-(4Z,7Z,10Z,13Z,16Z)-docosapentaenoate + oxidized [NADPH--hemoprotein reductase] + H2O + H(+). It catalyses the reaction all-trans-retinoate + reduced [NADPH--hemoprotein reductase] + O2 = all-trans-4-hydroxyretinoate + oxidized [NADPH--hemoprotein reductase] + H2O + H(+). The catalysed reaction is 17beta-estradiol + reduced [NADPH--hemoprotein reductase] + O2 = 16alpha,17beta-estriol + oxidized [NADPH--hemoprotein reductase] + H2O + H(+). It carries out the reaction estrone + reduced [NADPH--hemoprotein reductase] + O2 = 16alpha-hydroxyestrone + oxidized [NADPH--hemoprotein reductase] + H2O + H(+). The protein operates within steroid metabolism. Its pathway is lipid metabolism; arachidonate metabolism. It functions in the pathway cofactor metabolism; retinol metabolism. In terms of biological role, a cytochrome P450 monooxygenase involved in the metabolism of various endogenous substrates, including fatty acids, steroid hormones and vitamins. Mechanistically, uses molecular oxygen inserting one oxygen atom into a substrate, and reducing the second into a water molecule, with two electrons provided by NADPH via cytochrome P450 reductase (NADPH--hemoprotein reductase). Primarily catalyzes the epoxidation of double bonds of polyunsaturated fatty acids (PUFA) with a preference for the last double bond. Catalyzes the hydroxylation of carbon-hydrogen bonds. Metabolizes all trans-retinoic acid toward its 4-hydroxylated form. Displays 16-alpha hydroxylase activity toward estrogen steroid hormones, 17beta-estradiol (E2) and estrone (E1). Plays a role in the oxidative metabolism of xenobiotics. It is the principal enzyme responsible for the metabolism of the anti-cancer drug paclitaxel (taxol). This is Cytochrome P450 2C8 from Homo sapiens (Human).